The sequence spans 228 residues: Ribose-5-phosphate isomerase A (228 aa).

Substrate-binding positions include 32–35, 85–88, and 98–101; these read TGST, DGAD, and KGGG. The active-site Proton acceptor is the Glu107. Lys125 contacts substrate.

Belongs to the ribose 5-phosphate isomerase family. Homodimer.

It carries out the reaction aldehydo-D-ribose 5-phosphate = D-ribulose 5-phosphate. It functions in the pathway carbohydrate degradation; pentose phosphate pathway; D-ribose 5-phosphate from D-ribulose 5-phosphate (non-oxidative stage): step 1/1. Its function is as follows. Catalyzes the reversible conversion of ribose-5-phosphate to ribulose 5-phosphate. This Cupriavidus necator (strain ATCC 17699 / DSM 428 / KCTC 22496 / NCIMB 10442 / H16 / Stanier 337) (Ralstonia eutropha) protein is Ribose-5-phosphate isomerase A.